Reading from the N-terminus, the 264-residue chain is uncharacterized protein (264 aa).

Disordered stretches follow at residues 1 to 52 (MPRS…AVPG) and 123 to 207 (GGRW…PWTR). Over residues 29 to 40 (AAHPTTSPTAAS) the composition is skewed to low complexity. A compositionally biased stretch (polar residues) spans 144-154 (HFQSSGAQQES). Positions 188–197 (ARKSACKCPR) are enriched in basic residues.

This is an uncharacterized protein from Homo sapiens (Human).